The sequence spans 237 residues: Concanavalin-A (237 aa).

E8 and D10 together coordinate Mn(2+). Residues D10, Y12, N14, and D19 each contribute to the Ca(2+) site. N14 lines the a carbohydrate pocket. The Mn(2+) site is built by D19 and H24. A carbohydrate contacts are provided by residues 98-100, D208, and R228; that span reads GLY.

Belongs to the leguminous lectin family. As to quaternary structure, homotetramer. Concanavalin A-like lectins of the Diocleinae subtribe undergo proteolytic processing referred to as circular permutation. The propeptide is split into an N-terminal and a C-terminal part, the gamma and beta chain, respectively. These are then religated in beta-gamma order to form the mature alpha chain. The beta and gamma chains can often be detected in cell extracts. Residues 1-118 of the mature chain, as displayed here, probably constitute the beta chain in the propeptide, residues 119-237 the gamma chain.

In terms of biological role, glucose/D-mannose specific lectin. The polypeptide is Concanavalin-A (Canavalia cathartica (Jackbean)).